A 148-amino-acid polypeptide reads, in one-letter code: Cytochrome c-type biogenesis protein CcmE (148 aa).

Residues 1–7 (MKPRHKK) are Cytoplasmic-facing. The chain crosses the membrane as a helical; Signal-anchor for type II membrane protein span at residues 8-28 (LAIIASSVTALGVASVLVLNA). The Periplasmic segment spans residues 29–148 (FQSNLVFFFS…ADKARKTVMQ (120 aa)). 2 residues coordinate heme: H123 and Y127.

Belongs to the CcmE/CycJ family.

The protein resides in the cell inner membrane. Heme chaperone required for the biogenesis of c-type cytochromes. Transiently binds heme delivered by CcmC and transfers the heme to apo-cytochromes in a process facilitated by CcmF and CcmH. The polypeptide is Cytochrome c-type biogenesis protein CcmE (Nitrosospira multiformis (strain ATCC 25196 / NCIMB 11849 / C 71)).